A 701-amino-acid chain; its full sequence is Protein SOSEKI 1 (701 aa).

The DIX-like oligomerization domain stretch occupies residues 8–101 (LSAQVLYQLS…YVLRASELID (94 aa)). Disordered regions lie at residues 238–262 (STVHGVHTPPSPSLKSSTELPFSPG), 300–329 (LPPNTHSTHEDNSFWRDSRSKSPSPSSLNE), 366–389 (PYNTCEGASTKIPESKHNSPYRTK), and 538–575 (IASSKPLPPGFHKGTNDTKPVQITPRRTPRNSIPLASP). Basic and acidic residues predominate over residues 306–319 (STHEDNSFWRDSRS). A C2HC/C3H-type zinc finger spans residues 658–687 (ILQECSICRRTFKPDSLQVHMRGCHPPQYA). 4 residues coordinate Zn(2+): cysteine 662, cysteine 665, histidine 677, and cysteine 681.

The protein belongs to the SOSEKI family. In terms of assembly, homodimer. Forms long polymer filaments with other SOKs proteins polymers crucial for polar localization and biological activity. Requires Zn(2+) as cofactor.

Its subcellular location is the cell membrane. In terms of biological role, SOSEKI proteins locally interpret global polarity cues and can influence cell division orientation to coordinate cell polarization relative to body axes. This chain is Protein SOSEKI 1, found in Physcomitrium patens (Spreading-leaved earth moss).